Consider the following 178-residue polypeptide: ATP synthase subunit delta (178 aa).

The protein belongs to the ATPase delta chain family. F-type ATPases have 2 components, F(1) - the catalytic core - and F(0) - the membrane proton channel. F(1) has five subunits: alpha(3), beta(3), gamma(1), delta(1), epsilon(1). F(0) has three main subunits: a(1), b(2) and c(10-14). The alpha and beta chains form an alternating ring which encloses part of the gamma chain. F(1) is attached to F(0) by a central stalk formed by the gamma and epsilon chains, while a peripheral stalk is formed by the delta and b chains.

The protein resides in the cell membrane. In terms of biological role, f(1)F(0) ATP synthase produces ATP from ADP in the presence of a proton or sodium gradient. F-type ATPases consist of two structural domains, F(1) containing the extramembraneous catalytic core and F(0) containing the membrane proton channel, linked together by a central stalk and a peripheral stalk. During catalysis, ATP synthesis in the catalytic domain of F(1) is coupled via a rotary mechanism of the central stalk subunits to proton translocation. This protein is part of the stalk that links CF(0) to CF(1). It either transmits conformational changes from CF(0) to CF(1) or is implicated in proton conduction. This chain is ATP synthase subunit delta, found in Streptococcus gordonii (strain Challis / ATCC 35105 / BCRC 15272 / CH1 / DL1 / V288).